The chain runs to 134 residues: UPF0756 membrane protein YeaL (134 aa).

4 consecutive transmembrane segments (helical) span residues 14–34, 51–71, 86–106, and 110–130; these read ALGF…LIIV, LTVG…SGTL, LVAI…ITLM, and PQLV…FRGV.

The protein belongs to the UPF0756 family.

The protein resides in the cell membrane. The polypeptide is UPF0756 membrane protein YeaL (Salmonella typhimurium (strain LT2 / SGSC1412 / ATCC 700720)).